Consider the following 94-residue polypeptide: Large ribosomal subunit protein uL23 (94 aa).

It belongs to the universal ribosomal protein uL23 family. As to quaternary structure, part of the 50S ribosomal subunit. Contacts protein L29, and trigger factor when it is bound to the ribosome.

In terms of biological role, one of the early assembly proteins it binds 23S rRNA. One of the proteins that surrounds the polypeptide exit tunnel on the outside of the ribosome. Forms the main docking site for trigger factor binding to the ribosome. The protein is Large ribosomal subunit protein uL23 of Mycoplasma mycoides subsp. mycoides SC (strain CCUG 32753 / NCTC 10114 / PG1).